The primary structure comprises 447 residues: Glucose-6-phosphate isomerase (447 aa).

Glu288 functions as the Proton donor in the catalytic mechanism. Active-site residues include His309 and Lys423.

Belongs to the GPI family.

The protein resides in the cytoplasm. It catalyses the reaction alpha-D-glucose 6-phosphate = beta-D-fructose 6-phosphate. The protein operates within carbohydrate biosynthesis; gluconeogenesis. It functions in the pathway carbohydrate degradation; glycolysis; D-glyceraldehyde 3-phosphate and glycerone phosphate from D-glucose: step 2/4. In terms of biological role, catalyzes the reversible isomerization of glucose-6-phosphate to fructose-6-phosphate. This Lactobacillus johnsonii (strain CNCM I-12250 / La1 / NCC 533) protein is Glucose-6-phosphate isomerase.